The following is a 143-amino-acid chain: Transcription antitermination protein NusB (143 aa).

The protein belongs to the NusB family.

Functionally, involved in transcription antitermination. Required for transcription of ribosomal RNA (rRNA) genes. Binds specifically to the boxA antiterminator sequence of the ribosomal RNA (rrn) operons. The protein is Transcription antitermination protein NusB of Desulforamulus reducens (strain ATCC BAA-1160 / DSM 100696 / MI-1) (Desulfotomaculum reducens).